The primary structure comprises 109 residues: Nucleoid-associated protein VS_0917 (109 aa).

2 disordered regions span residues 1 to 22 (MFGK…ERMQ) and 88 to 109 (QKEK…KMPF). Over residues 9 to 18 (NMMKQAQQMQ) the composition is skewed to low complexity.

This sequence belongs to the YbaB/EbfC family. In terms of assembly, homodimer.

The protein localises to the cytoplasm. The protein resides in the nucleoid. Its function is as follows. Binds to DNA and alters its conformation. May be involved in regulation of gene expression, nucleoid organization and DNA protection. The sequence is that of Nucleoid-associated protein VS_0917 from Vibrio atlanticus (strain LGP32) (Vibrio splendidus (strain Mel32)).